A 1005-amino-acid polypeptide reads, in one-letter code: Espin-like protein (1005 aa).

ANK repeat units follow at residues 1 to 31 (MEAQ…RPDI), 35 to 64 (LGAG…LPGN), 69 to 99 (NGAT…GLQD), 103 to 132 (SGVS…AATL), 136 to 166 (EGAL…GVNQ), 170 to 200 (SGAS…DVRL), 204 to 234 (DGMS…GLTA), 238 to 267 (EGAT…PIMR), 270 to 299 (WGGT…DPFL), and 303 to 332 (DGYT…PVRV). 2 disordered regions span residues 355–383 (EERR…VPRE) and 458–480 (ADHP…AAEQ). Over residues 458 to 469 (ADHPPEDQDQSQ) the composition is skewed to basic and acidic residues. A coiled-coil region spans residues 502–539 (EDDLVYLEKQINDLQLRRRCQEYESELGRLAAQLQALL). 4 disordered regions span residues 611-643 (LAQG…QREI), 692-729 (PRGD…GPGL), 764-794 (LEAQ…PRLG), and 951-975 (PHAS…SQGS).

Interacts with MYO3A (via C-terminus). Interacts with MYO3B (via C-terminus). As to expression, expressed in inner ear hair cells. Expressed in utricle hair bundles (at protein level). Expressed in choclea (at protein level).

The protein localises to the cell projection. It is found in the stereocilium. Its function is as follows. Binds to but does not cross-link actin. Required for the formation and maintenance of inner ear hair cell stereocilia and staircase formation. Essential for normal hearing. This Mus musculus (Mouse) protein is Espin-like protein (Espnl).